We begin with the raw amino-acid sequence, 699 residues long: Elongation factor G (699 aa).

Residues 8-288 form the tr-type G domain; sequence EDYRNFGIMA…AVVDYLPSPV (281 aa). GTP is bound by residues 17-24, 86-90, and 140-143; these read AHIDAGKT, DTPGH, and NKMD.

This sequence belongs to the TRAFAC class translation factor GTPase superfamily. Classic translation factor GTPase family. EF-G/EF-2 subfamily.

It is found in the cytoplasm. Its function is as follows. Catalyzes the GTP-dependent ribosomal translocation step during translation elongation. During this step, the ribosome changes from the pre-translocational (PRE) to the post-translocational (POST) state as the newly formed A-site-bound peptidyl-tRNA and P-site-bound deacylated tRNA move to the P and E sites, respectively. Catalyzes the coordinated movement of the two tRNA molecules, the mRNA and conformational changes in the ribosome. This chain is Elongation factor G, found in Sinorhizobium medicae (strain WSM419) (Ensifer medicae).